Consider the following 500-residue polypeptide: Cytochrome P450 71B34 (500 aa).

A helical membrane pass occupies residues 1–21 (MTNIWLLSLIFVICILVAVFN). Position 440 (cysteine 440) interacts with heme.

This sequence belongs to the cytochrome P450 family. It depends on heme as a cofactor.

The protein localises to the membrane. The sequence is that of Cytochrome P450 71B34 (CYP71B34) from Arabidopsis thaliana (Mouse-ear cress).